The sequence spans 392 residues: 8-amino-7-oxononanoate synthase (392 aa).

Arg18 contacts substrate. Position 105–106 (105–106 (GY)) interacts with pyridoxal 5'-phosphate. His130 lines the substrate pocket. Residues Ser177, His205, and Thr234 each contribute to the pyridoxal 5'-phosphate site. Lys237 carries the post-translational modification N6-(pyridoxal phosphate)lysine. Thr351 lines the substrate pocket.

It belongs to the class-II pyridoxal-phosphate-dependent aminotransferase family. BioF subfamily. As to quaternary structure, homodimer. It depends on pyridoxal 5'-phosphate as a cofactor.

The catalysed reaction is 6-carboxyhexanoyl-[ACP] + L-alanine + H(+) = (8S)-8-amino-7-oxononanoate + holo-[ACP] + CO2. It participates in cofactor biosynthesis; biotin biosynthesis. Catalyzes the decarboxylative condensation of pimeloyl-[acyl-carrier protein] and L-alanine to produce 8-amino-7-oxononanoate (AON), [acyl-carrier protein], and carbon dioxide. The sequence is that of 8-amino-7-oxononanoate synthase from Thioalkalivibrio sulfidiphilus (strain HL-EbGR7).